Here is a 34-residue protein sequence, read N- to C-terminus: CIKNGNGCQPDGSQGNCCSRYCHKEPGWVAGYCR.

3 cysteine pairs are disulfide-bonded: C1–C18, C8–C22, and C17–C33.

The protein resides in the secreted. In terms of biological role, has antifungal activity against C.glabrata. The sequence is that of Antimicrobial peptide Alo-1 from Acrocinus longimanus (Giant harlequin beetle).